Here is a 199-residue protein sequence, read N- to C-terminus: Shikimate kinase (199 aa).

14 to 19 is a binding site for ATP; sequence GSGKST. S18 contributes to the Mg(2+) binding site. Substrate is bound by residues D36, R60, and G82. R120 is an ATP binding site. Substrate is bound at residue R147.

The protein belongs to the shikimate kinase family. As to quaternary structure, monomer. Mg(2+) is required as a cofactor.

The protein localises to the cytoplasm. It catalyses the reaction shikimate + ATP = 3-phosphoshikimate + ADP + H(+). The protein operates within metabolic intermediate biosynthesis; chorismate biosynthesis; chorismate from D-erythrose 4-phosphate and phosphoenolpyruvate: step 5/7. Its function is as follows. Catalyzes the specific phosphorylation of the 3-hydroxyl group of shikimic acid using ATP as a cosubstrate. The chain is Shikimate kinase from Chlorobium limicola (strain DSM 245 / NBRC 103803 / 6330).